Reading from the N-terminus, the 394-residue chain is Mannosyl-3-phosphoglycerate synthase (394 aa).

The protein belongs to the glycosyltransferase 2 family. It depends on Mg(2+) as a cofactor.

Its subcellular location is the cytoplasm. It carries out the reaction (2R)-3-phosphoglycerate + GDP-alpha-D-mannose = 2-O-(alpha-D-mannosyl)-3-phosphoglycerate + GDP + H(+). It functions in the pathway carbohydrate biosynthesis; 2-(alpha-D-mannosyl)-D-glycerate biosynthesis; 2-(alpha-D-mannosyl)-D-glycerate from GDP-alpha-D-mannose (MPG route): step 1/2. Functionally, transfers a mannosyl group from GDP-mannose to phosphoglycerate to form mannosyl-3-phosphoglycerate (MPG). The enzyme is absolutely specific for GDP-mannose and 3-phosphoglycerate, and transfers the mannosyl group with retention of configuration. This is Mannosyl-3-phosphoglycerate synthase (mngA) from Pyrococcus horikoshii (strain ATCC 700860 / DSM 12428 / JCM 9974 / NBRC 100139 / OT-3).